The chain runs to 400 residues: Poly(A) polymerase type 3 (400 aa).

ATP is bound by residues 97 to 99 (FGS), threonine 106, 110 to 112 (DID), aspartate 164, lysine 225, tyrosine 234, and 243 to 244 (GV). Positions 110, 112, and 164 each coordinate Mg(2+). The Nuclear localization signal motif lies at 382 to 390 (GEIINKNKK).

The protein belongs to the poly(A) polymerase family. In terms of assembly, monomer. Mg(2+) is required as a cofactor. The cofactor is Mn(2+).

It localises to the nucleus. It carries out the reaction RNA(n) + ATP = RNA(n)-3'-adenine ribonucleotide + diphosphate. Functionally, polymerase that creates the 3'-poly(A) tail of mRNA's. May acquire specificity through interaction with a cleavage and polyadenylation factor (CPSF). This chain is Poly(A) polymerase type 3, found in Xenopus laevis (African clawed frog).